Here is a 200-residue protein sequence, read N- to C-terminus: MGRLHCTEDPVPEAVGGDMQQLNQLGAQQFSALTEVLFHFLTEPKEVERFLAQLSEFATTNQISLGSLRSIVKSLLLVPNGALKKSLTAKQVQADFITLGLSEEKATYFSEKWKQNAPTLARWAIGQTLMINQLIDMEWKFGVTSGSSELEKVGSIFLQLKLVVKKGNQTENVYIELTLPQFYSFLHEMERVRTSMECFC.

The COMM domain maps to 133-200; it reads QLIDMEWKFG…RVRTSMECFC (68 aa).

This sequence belongs to the COMM domain-containing protein 7 family. As to quaternary structure, component of the commander complex consisting of the CCC subcomplex and the retriever subcomplex. Component of the CCC (COMMD/CCDC22/CCDC93) subcomplex consisting of COMMD1, COMMD2, COMMD3, COMMD4, COMMD5, COMMD6, COMMD7, COMMD8, COMMD9, COMMD10, CCDC22 and CCDC93; within the complex forms a heterodimer with COMMD9. Interacts with RELA. Interacts with CCDC22, CCDC93, SCNN1B, CUL7. Widely expressed with highest expression in lung.

It is found in the cytoplasmic vesicle. In terms of biological role, scaffold protein in the commander complex that is essential for endosomal recycling of transmembrane cargos; the commander complex is composed of the CCC subcomplex and the retriever subcomplex. May modulate activity of cullin-RING E3 ubiquitin ligase (CRL) complexes. Associates with the NF-kappa-B complex and suppresses its transcriptional activity. In Homo sapiens (Human), this protein is COMM domain-containing protein 7 (COMMD7).